The primary structure comprises 183 residues: Large ribosomal subunit protein uL22 (183 aa).

Positions 163–183 are disordered; it reads KTAAKKQSAKKLKKQKMMYRE. A compositionally biased stretch (basic residues) spans 165-183; it reads AAKKQSAKKLKKQKMMYRE.

This sequence belongs to the universal ribosomal protein uL22 family.

This is Large ribosomal subunit protein uL22 (rpl-17) from Pectinaria gouldii (Trumpet worm).